The primary structure comprises 414 residues: Tyrosine--tRNA ligase (414 aa).

An L-tyrosine-binding site is contributed by Y40. A 'HIGH' region motif is present at residues 45–54 (ATAASLHVGH). The L-tyrosine site is built by Y175 and Q179. Residues 235 to 239 (KMGKS) carry the 'KMSKS' region motif. K238 lines the ATP pocket. Residues 349–414 (LTVVQLLAQT…KKKHRMVQLG (66 aa)) enclose the S4 RNA-binding domain.

The protein belongs to the class-I aminoacyl-tRNA synthetase family. TyrS type 1 subfamily. In terms of assembly, homodimer.

The protein resides in the cytoplasm. It catalyses the reaction tRNA(Tyr) + L-tyrosine + ATP = L-tyrosyl-tRNA(Tyr) + AMP + diphosphate + H(+). Functionally, catalyzes the attachment of tyrosine to tRNA(Tyr) in a two-step reaction: tyrosine is first activated by ATP to form Tyr-AMP and then transferred to the acceptor end of tRNA(Tyr). This chain is Tyrosine--tRNA ligase, found in Paracoccus denitrificans (strain Pd 1222).